The sequence spans 544 residues: Chaperonin GroEL (544 aa).

ATP is bound by residues 29-32 (TLGP), 86-90 (DGTTT), G413, 476-478 (NAA), and D492.

Belongs to the chaperonin (HSP60) family. As to quaternary structure, forms a cylinder of 14 subunits composed of two heptameric rings stacked back-to-back. Interacts with the co-chaperonin GroES.

The protein resides in the cytoplasm. The enzyme catalyses ATP + H2O + a folded polypeptide = ADP + phosphate + an unfolded polypeptide.. In terms of biological role, together with its co-chaperonin GroES, plays an essential role in assisting protein folding. The GroEL-GroES system forms a nano-cage that allows encapsulation of the non-native substrate proteins and provides a physical environment optimized to promote and accelerate protein folding. The sequence is that of Chaperonin GroEL from Bacillus velezensis (strain DSM 23117 / BGSC 10A6 / LMG 26770 / FZB42) (Bacillus amyloliquefaciens subsp. plantarum).